The sequence spans 1210 residues: uncharacterized protein (1210 aa).

This sequence to E.coli molybdate metabolism regulator (MolR).

This is an uncharacterized protein from Escherichia coli (strain K12).